The following is a 184-amino-acid chain: dCTP deaminase (184 aa).

DCTP is bound by residues 107-112, 131-133, Gln152, Tyr166, and Gln176; these read KSTYAR and TLE. Glu133 (proton donor/acceptor) is an active-site residue.

Belongs to the dCTP deaminase family. Homotrimer.

It carries out the reaction dCTP + H2O + H(+) = dUTP + NH4(+). Its pathway is pyrimidine metabolism; dUMP biosynthesis; dUMP from dCTP (dUTP route): step 1/2. Its function is as follows. Catalyzes the deamination of dCTP to dUTP. The sequence is that of dCTP deaminase from Gemmatimonas aurantiaca (strain DSM 14586 / JCM 11422 / NBRC 100505 / T-27).